Here is a 359-residue protein sequence, read N- to C-terminus: Aminomethyltransferase (359 aa).

It belongs to the GcvT family. In terms of assembly, the glycine cleavage system is composed of four proteins: P, T, L and H.

The catalysed reaction is N(6)-[(R)-S(8)-aminomethyldihydrolipoyl]-L-lysyl-[protein] + (6S)-5,6,7,8-tetrahydrofolate = N(6)-[(R)-dihydrolipoyl]-L-lysyl-[protein] + (6R)-5,10-methylene-5,6,7,8-tetrahydrofolate + NH4(+). The glycine cleavage system catalyzes the degradation of glycine. The protein is Aminomethyltransferase of Alcanivorax borkumensis (strain ATCC 700651 / DSM 11573 / NCIMB 13689 / SK2).